Consider the following 824-residue polypeptide: MGFCMKDSKQYYKSSIGKSLKRSNGYLKLVLVLYLIMVSWSGYSKEVFNSRTKENINANWLYLEKNIKDINLALNDANWESINLPHTWNALDATDLNPGYRRSGSWYKKELAISNIENNKLYQLYFEGVNINSEVYVNGQKAGGHIGGYIGFTIDITEFIKSGKNDIVIRVDNSYDPEVIPSQKSDFFIFGGITRDVWLETIPKQHLSELKITTPKVSENEAELLATVAINNLNNSNLKVQANLLDAQGVTVVSSVFKIKNNTAKIHFRNIKNPKLWDTEHPNLYTLKVALLEKGDVIDSVQNRVGFRWFEFKDHGAFYLNGKRVLLRGTHRHEEHAGVGAAMSNMQHRKDMELIKDMGANFVRLAHYPQDPEVYKACDELGLLIWDELPWCRGGLGNETWKTNTKNMLTEIINQNYNHPSIIIWSLGNEMYWLPDFENGDDTDKMNSFLTELNDLAHQLDPSRKTAIRKYYEGSHIVDVFSPSIWSGWYSGSYKSYQKAIDTYKKEYPHFLHAEYGGSSHVGRHTENPVTGEGKIQSDGWEEEIVQTDVANIAQIGDWSENYIVDLFDWHLRISENDENFVGNVQWAFKDFGTPLRPENAIPYMNQKGLVDRAGNPKDAFYVFKSYWSKEPFTYIESHTWTERQGPKDLARDISVYSNCPEVELFLNGKSLGVKKRDLKVFPAAGLNWNLNFKEGKNTLVAVGKTKENKTVKDELAINYRFTKNGKAVGLKLESELLENGNYLVTAIAYDKNGLRCLDYEDQVYFQCLSGGETLKSQGTPTGSESIAMANGKAAIEVKRDGKNIPVVMMVLNQNFKGTYLTIE.

The helical transmembrane segment at 26-43 threads the bilayer; it reads YLKLVLVLYLIMVSWSGY. The Proton donor role is filled by Glu-430.

The protein belongs to the glycosyl hydrolase 2 family.

It is found in the membrane. It catalyses the reaction a beta-D-glucuronoside + H2O = D-glucuronate + an alcohol. In terms of biological role, glycoside hydrolase that may be involved in ulvan degradation. Ulvan is the main polysaccharide component of the Ulvales (green seaweed) cell wall. It is composed of disaccharide building blocks comprising 3-sulfated rhamnose (Rha3S) linked to D-glucuronic acid (GlcA), L-iduronic acid (IduA), or D-xylose (Xyl). This Formosa agariphila (strain DSM 15362 / KCTC 12365 / LMG 23005 / KMM 3901 / M-2Alg 35-1) protein is Putative beta-glucuronidase.